The following is a 356-amino-acid chain: MSQQNTVEGGFDLSSGVSDKKEWVFNLQEVIPTGHKRTVRSVAWSPNGEVLATASFDSTVGLWERIPENIRAEEGSDGPEWECFGTLEGHDSECKSVAFSYNGNLLASCGRDKSVWVWEAQPDADYECIGVLIEHSQDVKCVIWHPKEEILASASYDNTIKMYVDDPSCDWYCYTTLQAHSSTVWSLSFSPCGQFLASSSDDMTIWIWRRVSAAECVELGIQAHGNTPGRSGERWVPTYCIQGHFSGPIFSVNWAPGDSFDPRQALGKLVAAGADGKIIVFFLVRIYATLRGTYACAQSLEDNNPSRIFVHVGAQEENAHGSVDVNCVKWAPMNTDGSAPTMIASAGDDGEIRIWT.

WD repeat units follow at residues 34-73 (GHKRTVRSVAWSPNGEVLATASFDSTVGLWERIPENIRAE), 89-128 (GHDSECKSVAFSYNGNLLASCGRDKSVWVWEAQPDADYEC), 134-173 (EHSQDVKCVIWHPKEEILASASYDNTIKMYVDDPSCDWYC), 179-218 (AHSSTVWSLSFSPCGQFLASSSDDMTIWIWRRVSAAECVE), 244-291 (HFSG…ATLR), and 319-356 (AHGSVDVNCVKWAPMNTDGSAPTMIASAGDDGEIRIWT).

The protein belongs to the WD repeat CIA1 family.

Essential component of the cytosolic iron-sulfur (Fe/S) protein assembly machinery. Required for the maturation of extramitochondrial Fe/S proteins. The sequence is that of Probable cytosolic iron-sulfur protein assembly protein 1 from Malassezia globosa (strain ATCC MYA-4612 / CBS 7966) (Dandruff-associated fungus).